A 1253-amino-acid polypeptide reads, in one-letter code: Cytoplasmic FMR1-interacting protein 1 (1253 aa).

Serine 583 carries the phosphoserine modification. Threonine 1234 carries the phosphothreonine modification.

Belongs to the CYFIP family. In terms of assembly, component of the WAVE1 complex composed of ABI2, CYFIP1 or CYFIP2, BRK1, NCKAP1 and WASF1/WAVE1. Within the complex, a heterodimer containing NCKAP1 and CYFIP1 interacts with a heterotrimer formed by WAVE1, ABI2 and BRK1. Component of the CYFIP1-EIF4E-FMR1 complex which is composed of CYFIP, EIF4E and FMR1. Interacts with FMR1 but does not bind to related proteins FXR1 or FXR2. Interaction with EIF4E stimulates FMR1 binding. Component of the WAVE2 complex composed of ABI1, CYFIP1/SRA1, NCKAP1/NAP1 (NCKAP1l/HEM1 in hematopoietic cells) and WASF2/WAVE2. Interacts with the active GTP-bound form of RAC1. Interacts through its C-terminus with the C-terminus of DPYSL2/CRMP2 which is necessary for DPYSL2-induced axon outgrowth. Interacts with NYAP1, NYAP2 and MYO16. Interacts with TMEM108 (via N-terminus); the interaction associates TMEM108 with the WAVE1 complex.

Its subcellular location is the cytoplasm. It localises to the perinuclear region. The protein localises to the cell projection. The protein resides in the lamellipodium. It is found in the ruffle. Its subcellular location is the synapse. It localises to the synaptosome. In terms of biological role, component of the CYFIP1-EIF4E-FMR1 complex which binds to the mRNA cap and mediates translational repression. In the CYFIP1-EIF4E-FMR1 complex this subunit is an adapter between EIF4E and FMR1. Promotes the translation repression activity of FMR1 in brain probably by mediating its association with EIF4E and mRNA. Regulates formation of membrane ruffles and lamellipodia. Plays a role in axon outgrowth. Binds to F-actin but not to RNA. Part of the WAVE complex that regulates actin filament reorganization via its interaction with the Arp2/3 complex. Actin remodeling activity is regulated by RAC1. Regulator of epithelial morphogenesis. As component of the WAVE1 complex, required for BDNF-NTRK2 endocytic trafficking and signaling from early endosomes. May act as an invasion suppressor in cancers. This chain is Cytoplasmic FMR1-interacting protein 1, found in Homo sapiens (Human).